The primary structure comprises 224 residues: PKHD-type hydroxylase Shewmr4_3244 (224 aa).

In terms of domain architecture, Fe2OG dioxygenase spans 78–176; that stretch reads QFYPPLFNRY…RTAAFMWLQS (99 aa). Fe cation contacts are provided by H96, D98, and H157. R167 is a binding site for 2-oxoglutarate.

Fe(2+) serves as cofactor. L-ascorbate is required as a cofactor.

The chain is PKHD-type hydroxylase Shewmr4_3244 from Shewanella sp. (strain MR-4).